Consider the following 103-residue polypeptide: Small ribosomal subunit protein uS10 (103 aa).

Belongs to the universal ribosomal protein uS10 family. Part of the 30S ribosomal subunit.

Its function is as follows. Involved in the binding of tRNA to the ribosomes. The sequence is that of Small ribosomal subunit protein uS10 from Chlorobaculum tepidum (strain ATCC 49652 / DSM 12025 / NBRC 103806 / TLS) (Chlorobium tepidum).